Consider the following 265-residue polypeptide: uncharacterized protein (265 aa).

Residues 1–160 (MDKSKNLFDL…STEPVVAAPV (160 aa)) are disordered. Residues 28–42 (AAAAPVAAKKPVAPK) show a composition bias toward low complexity. Basic and acidic residues-rich tracts occupy residues 73 to 85 (SEERQNTKRDSKS) and 102 to 119 (RQFDRKSGTGRPHNENKK).

It belongs to the SERBP1-HABP4 family.

Functionally, ribosome-binding protein that acts as a regulator of mRNA translation by promoting ribosome inactivation. This is an uncharacterized protein from Dictyostelium discoideum (Social amoeba).